A 537-amino-acid polypeptide reads, in one-letter code: Frizzled-4 (537 aa).

The signal sequence occupies residues 1–36 (MAWRGAGPSVPGAPGGVGLSLGLLLQLLLLLGPARG). Over 37–212 (FGDEEERRCD…KCGYDAGLYS (176 aa)) the chain is Extracellular. The region spanning 40–161 (EEERRCDPIR…NDHNHMCMEG (122 aa)) is the FZ domain. Cystine bridges form between C45–C106, C53–C99, C90–C128, C117–C158, C121–C145, C181–C200, C204–C282, and C302–C377. An N-linked (GlcNAc...) asparagine glycan is attached at N59. N144 is a glycosylation site (N-linked (GlcNAc...) asparagine). A helical membrane pass occupies residues 213 to 243 (RSAKEFTDIWMAVWASLCFISTAFTVLTFLI). The Cytoplasmic portion of the chain corresponds to 244–249 (DSSRFS). A helical transmembrane segment spans residues 250–275 (YPERPIIFLSMCYNIYSIAYIVRLTV). The Extracellular portion of the chain corresponds to 276–299 (GRERISCDFEEAAEPVLIQEGLKN). A helical transmembrane segment spans residues 300–333 (TGCAIIFLLMYFFGMASSIWWVILTLTWFLAAGL). Residues 334-336 (KWG) lie on the Cytoplasmic side of the membrane. The chain crosses the membrane as a helical span at residues 337-365 (HEAIEMHSSYFHIAAWAIPAVKTIVILIM). Topologically, residues 366–383 (RLVDADELTGLCYVGNQN) are extracellular. Residues 384-418 (LDALTGFVVAPLFTYLVIGTLFIAAGLVALFKIRS) form a helical membrane-spanning segment. At 419-431 (NLQKDGTKTDKLE) the chain is on the cytoplasmic side. The chain crosses the membrane as a helical span at residues 432 to 460 (RLMVKIGVFSVLYTVPATCVIACYFYEIS). Residues 461–473 (NWALFRYSADDSN) lie on the Extracellular side of the membrane. The helical transmembrane segment at 474 to 495 (MAVEMLKIFMSLLVGITSGMWI) threads the bilayer. The Cytoplasmic segment spans residues 496-537 (WSAKTLHTWQKCSNRLVNSGKVKREKRGNGWVKPGKGSETVV). A Lys-Thr-X-X-X-Trp motif, mediates interaction with the PDZ domain of Dvl family members motif is present at residues 499-504 (KTLHTW). Positions 535–537 (TVV) match the PDZ-binding motif.

The protein belongs to the G-protein coupled receptor Fz/Smo family. In terms of assembly, interacts with MAGI3 and NDP. Component of a complex, at least composed of TSPAN12, FZD4 and norrin (NDP). Interacts (via FZ domain) with TSKU; TSKU competes with WNT2B for binding to FZD4, inhibiting Wnt signaling and repressing peripheral eye development. Interacts with glypican GPC3. Ubiquitinated by ZNRF3, leading to its degradation by the proteasome. Almost ubiquitous. Largely expressed in adult heart, skeletal muscle, ovary, and fetal kidney. Moderate amounts in adult liver, kidney, pancreas, spleen, and fetal lung, and small amounts in placenta, adult lung, prostate, testis, colon, fetal brain and liver.

It localises to the cell membrane. Receptor for Wnt proteins. Most frizzled receptors are coupled to the beta-catenin (CTNNB1) canonical signaling pathway, which leads to the activation of disheveled proteins, inhibition of GSK-3 kinase, nuclear accumulation of beta-catenin (CTNNB1) and activation of Wnt target genes. Plays a critical role in retinal vascularization by acting as a receptor for Wnt proteins and norrin (NDP). In retina, it can be activated by Wnt protein-binding and also by Wnt-independent signaling via binding of norrin (NDP), promoting in both cases beta-catenin (CTNNB1) accumulation and stimulation of LEF/TCF-mediated transcriptional programs. A second signaling pathway involving PKC and calcium fluxes has been seen for some family members, but it is not yet clear if it represents a distinct pathway or if it can be integrated in the canonical pathway, as PKC seems to be required for Wnt-mediated inactivation of GSK-3 kinase. Both pathways seem to involve interactions with G-proteins. May be involved in transduction and intercellular transmission of polarity information during tissue morphogenesis and/or in differentiated tissues. The protein is Frizzled-4 (FZD4) of Homo sapiens (Human).